A 466-amino-acid chain; its full sequence is ATP synthase subunit beta (466 aa).

153-160 (GGAGVGKT) contributes to the ATP binding site.

It belongs to the ATPase alpha/beta chains family. As to quaternary structure, F-type ATPases have 2 components, CF(1) - the catalytic core - and CF(0) - the membrane proton channel. CF(1) has five subunits: alpha(3), beta(3), gamma(1), delta(1), epsilon(1). CF(0) has three main subunits: a(1), b(2) and c(9-12). The alpha and beta chains form an alternating ring which encloses part of the gamma chain. CF(1) is attached to CF(0) by a central stalk formed by the gamma and epsilon chains, while a peripheral stalk is formed by the delta and b chains.

It localises to the cell membrane. It catalyses the reaction ATP + H2O + 4 H(+)(in) = ADP + phosphate + 5 H(+)(out). Its function is as follows. Produces ATP from ADP in the presence of a proton gradient across the membrane. The catalytic sites are hosted primarily by the beta subunits. This Clostridium acetobutylicum (strain ATCC 824 / DSM 792 / JCM 1419 / IAM 19013 / LMG 5710 / NBRC 13948 / NRRL B-527 / VKM B-1787 / 2291 / W) protein is ATP synthase subunit beta.